A 324-amino-acid chain; its full sequence is 3'-5' exoribonuclease YhaM (324 aa).

In terms of domain architecture, HD spans 163–279 (HVVSMLELAK…LHYIDNLDAK (117 aa)).

The protein belongs to the YhaM family.

Its function is as follows. Shows a 3'-5' exoribonuclease activity. In Geobacillus sp. (strain WCH70), this protein is 3'-5' exoribonuclease YhaM.